A 387-amino-acid chain; its full sequence is Fetuin-B (387 aa).

The first 18 residues, 1–18 (MNVLLLLVLCTLAMGCGA), serve as a signal peptide directing secretion. 2 Cystatin fetuin-B-type domains span residues 25-139 (AARP…YNCT) and 150-258 (MTCP…VTCS). N37 carries N-linked (GlcNAc...) asparagine glycosylation. Disulfide bonds link C94/C105, C118/C138, C152/C155, C217/C225, and C238/C257. N137 carries an N-linked (GlcNAc...) asparagine glycan. A disordered region spans residues 264–306 (APTPRGENATVNQRPANPSKTEELQQQNTAPTNSPTKAVPKGS). Residue N271 is glycosylated (N-linked (GlcNAc...) asparagine). Polar residues predominate over residues 272-299 (ATVNQRPANPSKTEELQQQNTAPTNSPT). T292 and T295 each carry an O-linked (GalNAc...) threonine glycan. S320 carries the post-translational modification Phosphoserine. The tract at residues 366-387 (KEQRSAECPGPAQKGYPFILPS) is disordered.

This sequence belongs to the fetuin family. Liver and testis.

The protein localises to the secreted. Protease inhibitor required for egg fertilization. Required to prevent premature zona pellucida hardening before fertilization, probably by inhibiting the protease activity of ASTL, a protease that mediates the cleavage of ZP2 and triggers zona pellucida hardening. This is Fetuin-B (FETUB) from Bos taurus (Bovine).